The chain runs to 100 residues: Urease subunit gamma (100 aa).

Belongs to the urease gamma subunit family. Heterotrimer of UreA (gamma), UreB (beta) and UreC (alpha) subunits. Three heterotrimers associate to form the active enzyme.

It localises to the cytoplasm. It catalyses the reaction urea + 2 H2O + H(+) = hydrogencarbonate + 2 NH4(+). It functions in the pathway nitrogen metabolism; urea degradation; CO(2) and NH(3) from urea (urease route): step 1/1. In Pseudarthrobacter chlorophenolicus (strain ATCC 700700 / DSM 12829 / CIP 107037 / JCM 12360 / KCTC 9906 / NCIMB 13794 / A6) (Arthrobacter chlorophenolicus), this protein is Urease subunit gamma.